Here is a 344-residue protein sequence, read N- to C-terminus: Cycloartenol-C-24-methyltransferase 1 (344 aa).

The protein belongs to the class I-like SAM-binding methyltransferase superfamily. Erg6/SMT family.

It catalyses the reaction zymosterol + S-adenosyl-L-methionine = fecosterol + S-adenosyl-L-homocysteine + H(+). It functions in the pathway steroid biosynthesis; sterol biosynthesis. Functionally, catalyzes the methyl transfer from S-adenosyl-methionine to the C-24 of cycloartenol to form 24-methylene cycloartenol. This is Cycloartenol-C-24-methyltransferase 1 (Smt1-1) from Oryza sativa subsp. japonica (Rice).